The following is a 335-amino-acid chain: Nucleoid-associated protein YejK (335 aa).

Belongs to the YejK family.

The protein localises to the cytoplasm. It localises to the nucleoid. The polypeptide is Nucleoid-associated protein YejK (Salmonella arizonae (strain ATCC BAA-731 / CDC346-86 / RSK2980)).